We begin with the raw amino-acid sequence, 294 residues long: Cytidine deaminase (294 aa).

CMP/dCMP-type deaminase domains lie at 48–168 and 186–294; these read DEDA…FGPK and LTGD…VLLG. 89-91 provides a ligand contact to substrate; sequence NME. Histidine 102 provides a ligand contact to Zn(2+). The active-site Proton donor is the glutamate 104. Cysteine 129 and cysteine 132 together coordinate Zn(2+).

Belongs to the cytidine and deoxycytidylate deaminase family. Homodimer. It depends on Zn(2+) as a cofactor.

The enzyme catalyses cytidine + H2O + H(+) = uridine + NH4(+). It carries out the reaction 2'-deoxycytidine + H2O + H(+) = 2'-deoxyuridine + NH4(+). In terms of biological role, this enzyme scavenges exogenous and endogenous cytidine and 2'-deoxycytidine for UMP synthesis. The protein is Cytidine deaminase of Salmonella arizonae (strain ATCC BAA-731 / CDC346-86 / RSK2980).